A 61-amino-acid polypeptide reads, in one-letter code: MKRCELIRNVAIAISASAFSFSMFVGFICGLLTTAENVFSLVVAFLIGLIAIVMDKISKGE.

This is an uncharacterized protein from Escherichia coli (Bacteriophage T4).